Reading from the N-terminus, the 244-residue chain is Chaperone protein FimB/FhaD (244 aa).

Positions 1–24 (MARWRRRLGVAALGAAMLASLAPA) are cleaved as a signal peptide.

It belongs to the periplasmic pilus chaperone family.

Its subcellular location is the periplasm. In terms of biological role, required for the biogenesis of the filamentous hemagglutinin and the fimbria. The protein is Chaperone protein FimB/FhaD (fimB) of Bordetella pertussis (strain Tohama I / ATCC BAA-589 / NCTC 13251).